Here is a 766-residue protein sequence, read N- to C-terminus: ATP-dependent RNA helicase mak5 (766 aa).

Disordered regions lie at residues 1 to 28 (MGQK…AVED) and 75 to 173 (LRFK…SIKP). Residues 78–91 (KAAHGKPKKSILKK) show a composition bias toward basic residues. Residues 95–106 (EEEEPKFDDDEW) show a composition bias toward acidic residues. 2 stretches are compositionally biased toward basic and acidic residues: residues 114 to 126 (VTEK…KEDQ) and 132 to 171 (ADKP…DKSI). A Q motif motif is present at residues 192–220 (SAWESLGLSPEILTSLSKMKFTTPTLVQK). Residues 223 to 433 (IPQILDGHDV…AGKARWTGGD (211 aa)) enclose the Helicase ATP-binding domain. ATP is bound at residue 236–243 (ASTGSGKT). Positions 360–363 (DEAD) match the DEAD box motif. The region spanning 485–635 (YLYTLLLYNP…KLPLESLELD (151 aa)) is the Helicase C-terminal domain. The interval 683 to 711 (EEFESAQGRGRGRGRGRQERQRKAGEVTK) is disordered. Positions 698 to 711 (GRQERQRKAGEVTK) are enriched in basic and acidic residues.

The protein belongs to the DEAD box helicase family. DDX24/MAK5 subfamily.

It localises to the nucleus. It is found in the nucleolus. It catalyses the reaction ATP + H2O = ADP + phosphate + H(+). Its function is as follows. ATP-binding RNA helicase involved in the biogenesis of 60S ribosomal subunits and is required for the normal formation of 25S and 5.8S rRNAs. The polypeptide is ATP-dependent RNA helicase mak5 (mak5) (Aspergillus niger (strain ATCC MYA-4892 / CBS 513.88 / FGSC A1513)).